The primary structure comprises 1309 residues: Lysine-specific demethylase 2B (1309 aa).

The residue at position 26 (S26) is a Phosphoserine. In terms of domain architecture, JmjC spans 147 to 315 (FSHTKLEHLV…MQLRIYEIED (169 aa)). T208 contributes to the substrate binding site. 2 residues coordinate Fe cation: H211 and D213. K228 provides a ligand contact to substrate. H283 lines the Fe cation pocket. Acidic residues predominate over residues 378–403 (DMEEESCEQQPQEEEEEEEDKEEEGD). Residues 378 to 476 (DMEEESCEQQ…PTGSPATEVS (99 aa)) are disordered. Over residues 404–413 (GADKTPKPPT) the composition is skewed to basic and acidic residues. Over residues 415 to 424 (DPTSPTSTPP) the composition is skewed to low complexity. Residues S447 and S450 each carry the phosphoserine modification. T466 carries the phosphothreonine modification. The segment covering 467–476 (PTGSPATEVS) has biased composition (polar residues). Position 470 is a phosphoserine (S470). A CXXC-type zinc finger spans residues 579 to 625 (ARRRRTRCRKCEACLRTECGECHFCKDMKKFGGPGRMKQSCIMRQCI). Zn(2+) is bound by residues C586, C589, C592, C597, C600, C603, C619, C624, C635, C638, C661, C664, H669, C672, C692, and C695. A PHD-type zinc finger spans residues 632 to 698 (TAVCLVCGEA…CWECPKCNHA (67 aa)). 2 disordered regions span residues 700–816 (KTGK…SLSP) and 828–1005 (QLKP…SASP). A compositionally biased stretch (basic and acidic residues) spans 722 to 772 (KEQKMNRDNKEGQEPAKRRSECEEAPRRRSDEHPKKVPADGILRRKSDDVH). Residues 792–816 (SSLQTSPGSSSHLSPRPPLGSSLSP) show a composition bias toward low complexity. Glycyl lysine isopeptide (Lys-Gly) (interchain with G-Cter in SUMO2) cross-links involve residues K830 and K863. Over residues 883–892 (SRSSSPTAGP) the composition is skewed to polar residues. A compositionally biased stretch (basic residues) spans 905 to 914 (KVKMRRKRRL). The segment covering 915–933 (VNKELSKELSKELNHEIQK) has biased composition (basic and acidic residues). Residues 916–944 (NKELSKELSKELNHEIQKTESTLAHESQQ) adopt a coiled-coil conformation. S924 is subject to Phosphoserine. Residues 934–946 (TESTLAHESQQPI) show a composition bias toward polar residues. 2 positions are modified to phosphoserine: S948 and S952. Over residues 955–968 (DEPKRPLSHCERPH) the composition is skewed to basic and acidic residues. S991 and S1004 each carry phosphoserine. One can recognise an F-box domain in the interval 1032 to 1078 (DGAAHVMHREVWMAVFSYLSHRDLCVCMRVCRTWNRWCCDKRLWTRI). 6 LRR repeats span residues 1106 to 1127 (WTNISKKQLSWLINRLPGLRDL), 1129 to 1155 (LSGCSWIAVSALCSSSCPLLRTLDVQW), 1195 to 1220 (GLDITDVSLRLIIRHMPLLSKLQLSY), 1221 to 1250 (CNHINDQSINLLTAVGTTTRDSLTEVNLSD), 1251 to 1275 (CNKVTDLCLSFFKRCGNICHIDLRY), and 1276 to 1309 (CKQVTKEGCEQFIAEMSVSVQFGQVEEKLLQKLS).

It belongs to the JHDM1 histone demethylase family. In terms of assembly, interacts with SKP1, forming heterodimers. The KDM2B-SKP1 heterodimeric complex interacts with the PCGF1-BCORL heterodimeric complex to form a homotetrameric polycomb repression complex 1 (PRC1.1). Directly interacts with CUL1. The SKP1-KDM2B interacts with UBB. Requires Fe(2+) as cofactor.

Its subcellular location is the nucleus. It localises to the nucleolus. The protein localises to the chromosome. It carries out the reaction N(6),N(6)-dimethyl-L-lysyl(36)-[histone H3] + 2 2-oxoglutarate + 2 O2 = L-lysyl(36)-[histone H3] + 2 formaldehyde + 2 succinate + 2 CO2. With respect to regulation, histone demethylase activity is inhibited by fumarate. Its function is as follows. Histone demethylase that demethylates 'Lys-4' and 'Lys-36' of histone H3, thereby playing a central role in histone code. Preferentially demethylates trimethylated H3 'Lys-4' and dimethylated H3 'Lys-36' residue while it has weak or no activity for mono- and tri-methylated H3 'Lys-36'. Preferentially binds the transcribed region of ribosomal RNA and represses the transcription of ribosomal RNA genes which inhibits cell growth and proliferation. May also serve as a substrate-recognition component of the SCF (SKP1-CUL1-F-box protein)-type E3 ubiquitin ligase complex. The sequence is that of Lysine-specific demethylase 2B (Kdm2b) from Mus musculus (Mouse).